Here is a 174-residue protein sequence, read N- to C-terminus: MIQLMLYSLIITTSIIFFNMIHPLALGLTLLIQTIFVCLLSGLMTKSFWYSYILFLIFLGGMLVLFIYVTSLASNEMFNLSIKLTLFSMFILFFMFILSMILDKTSITLFLMNNEMQSIIEMNSYFTENSLSLNKLYNFPTNFVTILLMNYLLITLIVVVKITKLFKGPIRMMS.

4 helical membrane-spanning segments follow: residues 24 to 44 (LALG…SGLM), 53 to 73 (ILFL…TSLA), 82 to 102 (IKLT…SMIL), and 143 to 163 (FVTI…VKIT).

Belongs to the complex I subunit 6 family.

Its subcellular location is the mitochondrion membrane. It carries out the reaction a ubiquinone + NADH + 5 H(+)(in) = a ubiquinol + NAD(+) + 4 H(+)(out). In terms of biological role, core subunit of the mitochondrial membrane respiratory chain NADH dehydrogenase (Complex I) that is believed to belong to the minimal assembly required for catalysis. Complex I functions in the transfer of electrons from NADH to the respiratory chain. The immediate electron acceptor for the enzyme is believed to be ubiquinone. This Drosophila yakuba (Fruit fly) protein is NADH-ubiquinone oxidoreductase chain 6 (mt:ND6).